The sequence spans 292 residues: Phosphatidylserine decarboxylase proenzyme (292 aa).

Catalysis depends on charge relay system; for autoendoproteolytic cleavage activity residues aspartate 89, histidine 146, and serine 252. The active-site Schiff-base intermediate with substrate; via pyruvic acid; for decarboxylase activity is the serine 252. Serine 252 bears the Pyruvic acid (Ser); by autocatalysis mark.

It belongs to the phosphatidylserine decarboxylase family. PSD-B subfamily. Prokaryotic type I sub-subfamily. In terms of assembly, heterodimer of a large membrane-associated beta subunit and a small pyruvoyl-containing alpha subunit. Pyruvate serves as cofactor. Post-translationally, is synthesized initially as an inactive proenzyme. Formation of the active enzyme involves a self-maturation process in which the active site pyruvoyl group is generated from an internal serine residue via an autocatalytic post-translational modification. Two non-identical subunits are generated from the proenzyme in this reaction, and the pyruvate is formed at the N-terminus of the alpha chain, which is derived from the carboxyl end of the proenzyme. The autoendoproteolytic cleavage occurs by a canonical serine protease mechanism, in which the side chain hydroxyl group of the serine supplies its oxygen atom to form the C-terminus of the beta chain, while the remainder of the serine residue undergoes an oxidative deamination to produce ammonia and the pyruvoyl prosthetic group on the alpha chain. During this reaction, the Ser that is part of the protease active site of the proenzyme becomes the pyruvoyl prosthetic group, which constitutes an essential element of the active site of the mature decarboxylase.

The protein resides in the cell membrane. It carries out the reaction a 1,2-diacyl-sn-glycero-3-phospho-L-serine + H(+) = a 1,2-diacyl-sn-glycero-3-phosphoethanolamine + CO2. The protein operates within phospholipid metabolism; phosphatidylethanolamine biosynthesis; phosphatidylethanolamine from CDP-diacylglycerol: step 2/2. Functionally, catalyzes the formation of phosphatidylethanolamine (PtdEtn) from phosphatidylserine (PtdSer). This Shewanella baltica (strain OS223) protein is Phosphatidylserine decarboxylase proenzyme.